A 293-amino-acid chain; its full sequence is Protease HtpX (293 aa).

Transmembrane regions (helical) follow at residues Ile-4–Leu-24 and Val-32–Leu-52. His-139 contacts Zn(2+). Glu-140 is an active-site residue. His-143 is a Zn(2+) binding site. 2 helical membrane-spanning segments follow: residues Val-158–Leu-178 and Leu-193–Ile-213. Glu-222 contributes to the Zn(2+) binding site.

This sequence belongs to the peptidase M48B family. Requires Zn(2+) as cofactor.

The protein resides in the cell inner membrane. This is Protease HtpX from Cronobacter sakazakii (strain ATCC BAA-894) (Enterobacter sakazakii).